The chain runs to 388 residues: Dual-specificity RNA methyltransferase RlmN (388 aa).

Glu-109 functions as the Proton acceptor in the catalytic mechanism. A Radical SAM core domain is found at 115 to 354 (EDDRATLCVS…TIVRKTRGDD (240 aa)). Residues Cys-122 and Cys-359 are joined by a disulfide bond. [4Fe-4S] cluster-binding residues include Cys-129, Cys-133, and Cys-136. S-adenosyl-L-methionine is bound by residues 183–184 (GE), Ser-215, 237–239 (SLH), and Asn-316. The S-methylcysteine intermediate role is filled by Cys-359.

Belongs to the radical SAM superfamily. RlmN family. [4Fe-4S] cluster serves as cofactor.

It is found in the cytoplasm. It carries out the reaction adenosine(2503) in 23S rRNA + 2 reduced [2Fe-2S]-[ferredoxin] + 2 S-adenosyl-L-methionine = 2-methyladenosine(2503) in 23S rRNA + 5'-deoxyadenosine + L-methionine + 2 oxidized [2Fe-2S]-[ferredoxin] + S-adenosyl-L-homocysteine. It catalyses the reaction adenosine(37) in tRNA + 2 reduced [2Fe-2S]-[ferredoxin] + 2 S-adenosyl-L-methionine = 2-methyladenosine(37) in tRNA + 5'-deoxyadenosine + L-methionine + 2 oxidized [2Fe-2S]-[ferredoxin] + S-adenosyl-L-homocysteine. Functionally, specifically methylates position 2 of adenine 2503 in 23S rRNA and position 2 of adenine 37 in tRNAs. m2A2503 modification seems to play a crucial role in the proofreading step occurring at the peptidyl transferase center and thus would serve to optimize ribosomal fidelity. This is Dual-specificity RNA methyltransferase RlmN from Cronobacter sakazakii (strain ATCC BAA-894) (Enterobacter sakazakii).